The chain runs to 354 residues: Fructose-bisphosphate aldolase (354 aa).

S61 is a binding site for D-glyceraldehyde 3-phosphate. Residue D104 is the Proton donor of the active site. The Zn(2+) site is built by H105, D139, E169, and H221. A dihydroxyacetone phosphate-binding site is contributed by G222. H260 is a binding site for Zn(2+). Residues 261-263 (GGS) and 282-285 (NIDT) contribute to the dihydroxyacetone phosphate site.

The protein belongs to the class II fructose-bisphosphate aldolase family. Homodimer. The cofactor is Zn(2+).

It catalyses the reaction beta-D-fructose 1,6-bisphosphate = D-glyceraldehyde 3-phosphate + dihydroxyacetone phosphate. It functions in the pathway carbohydrate degradation; glycolysis; D-glyceraldehyde 3-phosphate and glycerone phosphate from D-glucose: step 4/4. Its function is as follows. Catalyzes the aldol condensation of dihydroxyacetone phosphate (DHAP or glycerone-phosphate) with glyceraldehyde 3-phosphate (G3P) to form fructose 1,6-bisphosphate (FBP) in gluconeogenesis and the reverse reaction in glycolysis. This is Fructose-bisphosphate aldolase (fba) from Campylobacter jejuni subsp. jejuni serotype O:2 (strain ATCC 700819 / NCTC 11168).